A 1058-amino-acid polypeptide reads, in one-letter code: COP1-interacting protein 7 (1058 aa).

Disordered stretches follow at residues 123-147, 262-281, and 330-463; these read LGGTWTSQKSTALSKTKGETDGDTV, HGNSMDASSQGSFETGQEGR, and MGDV…GNDN. Composition is skewed to polar residues over residues 126–136 and 262–276; these read TWTSQKSTALS and HGNSMDASSQGSFET. Residues 340 to 347 carry the Nuclear localization signal 1 motif; it reads SKKKKKKK. The segment covering 340–353 has biased composition (basic residues); it reads SKKKKKKKKNKKKS. Over residues 403–414 the composition is skewed to acidic residues; the sequence is DSDESGEEEGFV. The Nuclear localization signal 2 signature appears at 431 to 438; it reads ERRHKSTS. The segment covering 432–446 has biased composition (basic residues); the sequence is RRHKSTSHRQRKHKS. A compositionally biased stretch (basic and acidic residues) spans 447–462; the sequence is HNGDDDSSNKETKGND. Ser-477 bears the Phosphoserine mark. Residues 708–887 form a disordered region; the sequence is AGEQTLDGKE…KSVELSRDPS (180 aa). A compositionally biased stretch (basic and acidic residues) spans 757–773; the sequence is SKSEMEEERKKRMEELL. Residues 764–771 carry the Nuclear localization signal 3 motif; the sequence is ERKKRMEE. Residues 783–808 are compositionally biased toward low complexity; the sequence is KSSGGSVSSSLASKKTPTVTKSVKSS. Basic and acidic residues-rich tracts occupy residues 860–869 and 878–887; these read KTEKAQEKKS and KSVELSRDPS. Phosphoserine is present on residues Ser-915, Ser-986, and Ser-992. The disordered stretch occupies residues 1020-1041; that stretch reads STPPATEADHSRKKWNSEETSP. A compositionally biased stretch (basic and acidic residues) spans 1026 to 1040; it reads EADHSRKKWNSEETS.

In terms of assembly, interacts with COP1.

The protein resides in the nucleus. Functionally, exhibits transcriptional activation activity. Positive regulator of light-regulated genes, probably being a direct downstream target of COP1 for mediating light control of gene expression. This Arabidopsis thaliana (Mouse-ear cress) protein is COP1-interacting protein 7.